The sequence spans 204 residues: Proteasome subunit beta type-3 (204 aa).

It belongs to the peptidase T1B family. The 26S proteasome consists of a 20S proteasome core and two 19S regulatory subunits. The 20S proteasome core is composed of 28 subunits that are arranged in four stacked rings, resulting in a barrel-shaped structure. The two end rings are each formed by seven alpha subunits, and the two central rings are each formed by seven beta subunits. The catalytic chamber with the active sites is on the inside of the barrel.

It localises to the cytoplasm. It is found in the nucleus. Its function is as follows. Non-catalytic component of the proteasome, a multicatalytic proteinase complex which is characterized by its ability to cleave peptides with Arg, Phe, Tyr, Leu, and Glu adjacent to the leaving group at neutral or slightly basic pH. The proteasome has an ATP-dependent proteolytic activity. The chain is Proteasome subunit beta type-3 (PBC1) from Oryza sativa subsp. japonica (Rice).